The primary structure comprises 468 residues: Bone morphogenetic protein 3 (468 aa).

The signal sequence occupies residues 1–22; the sequence is MAGARGLLCLWLGYFCLNLAQG. Residues 23-358 constitute a propeptide that is removed on maturation; the sequence is QRPNLHLPGL…EQTLKKARRK (336 aa). Residues 29–53 form a disordered region; that stretch reads LPGLRETEPSDRATGGSPSPDLRPH. Asparagine 115, asparagine 139, asparagine 171, and asparagine 216 each carry an N-linked (GlcNAc...) asparagine glycan. The interval 314-349 is disordered; it reads RKPYKSLQTQPPEKSRNKKKQRKGSHQKGQTLQFDE. Residues 329–339 show a composition bias toward basic residues; the sequence is RNKKKQRKGSH. Polar residues predominate over residues 340–349; that stretch reads QKGQTLQFDE. Disulfide bonds link cysteine 366/cysteine 433, cysteine 395/cysteine 465, and cysteine 399/cysteine 467. N-linked (GlcNAc...) asparagine glycosylation is present at asparagine 459.

This sequence belongs to the TGF-beta family. As to quaternary structure, homodimer; disulfide-linked.

The protein resides in the secreted. In terms of biological role, negatively regulates bone density. Antagonizes the ability of certain osteogenic BMPs to induce osteoprogenitor differentiation and ossification. The polypeptide is Bone morphogenetic protein 3 (Bmp3) (Mus musculus (Mouse)).